A 188-amino-acid polypeptide reads, in one-letter code: UPF0301 protein azo3459 (188 aa).

This sequence belongs to the UPF0301 (AlgH) family.

The protein is UPF0301 protein azo3459 of Azoarcus sp. (strain BH72).